The sequence spans 828 residues: MKLSRRSFMKANAVAAAAAAAGLSVPGVARAVVGQQEAIKWDKAPCRFCGTGCGVLVGTQQGRVVACQGDPDAPVNRGLNCIKGYFLPKIMYGKDRLTQPLLRMKNGKYDKEGEFTPITWDQAFDVMEEKFKTALKEKGPESIGMFGSGQWTIWEGYAASKLFKAGFRSNNIDPNARHCMASAVVGFMRTFGMDEPMGCYDDIEQADAFVLWGSNMAEMHPILWSRITNRRLSNQNVTVAVLSTYQHRSFELADNGIIFTPQSDLVILNYIANYIIQNNAINQDFFSKHVNLRKGATDIGYGLRPTHPLEKAAKNPGSDASEPMSFEDYKAFVAEYTLEKTAEMTGVPKDQLEQLAQLYADPNKKVISYWTMGFNQHTRGVWANNLVYNLHLLTGKISQPGCGPFSLTGQPSACGTAREVGTFAHRLPADMVVTNEKHRDICEKKWNIPSGTIPAKIGLHAVAQDRALKDGKLNVYWTMCTNNMQAGPNINEERMPGWRDPRNFIIVSDPYPTVSALAADLILPTAMWVEKEGAYGNAERRTQFWRQQVQAPGEAKSDLWQLVQFSRRFKTEEVWPEELLAKKPELRGKTLYEVLYATPEVSKFPLSELAEDQLNDESHELGFYLQKGLFEEYAWFGRGHGHDLAPFDDYHKARGLRWPVVNGKETQWRYSEGNDPYVKAGEGYKFYGKPDGKAVIFALPFEPAAEAPDEEYDLWLSTGRVLEHWHTGSMTRRVPELHRAFPEAVLFIHPLDAKARDLRRGDKVKVVSRRGEVISIVETRGRNRPPQGLVYMPFFDAAQLVNKLTLDATDPLSKETDFKKCAVKLEKV.

The tat-type signal signal peptide spans 1–31 (MKLSRRSFMKANAVAAAAAAAGLSVPGVARA). The 57-residue stretch at 39-95 (IKWDKAPCRFCGTGCGVLVGTQQGRVVACQGDPDAPVNRGLNCIKGYFLPKIMYGKD) folds into the 4Fe-4S Mo/W bis-MGD-type domain. Residues C46, C49, C53, and C81 each coordinate [4Fe-4S] cluster. Mo-bis(molybdopterin guanine dinucleotide) contacts are provided by residues K83, Q150, N175, C179, 212 to 219 (WGSNMAEM), 243 to 247 (STYQH), 262 to 264 (QSD), M372, Q376, N482, 508 to 509 (SD), K531, D558, and 718 to 727 (TGRVLEHWHT). Substrate is bound at residue F794. The Mo-bis(molybdopterin guanine dinucleotide) site is built by N802 and K819.

This sequence belongs to the prokaryotic molybdopterin-containing oxidoreductase family. NasA/NapA/NarB subfamily. Component of the periplasmic nitrate reductase NapAB complex composed of NapA and NapB. The cofactor is [4Fe-4S] cluster. Requires Mo-bis(molybdopterin guanine dinucleotide) as cofactor. In terms of processing, predicted to be exported by the Tat system. The position of the signal peptide cleavage has not been experimentally proven.

The protein localises to the periplasm. It carries out the reaction 2 Fe(II)-[cytochrome] + nitrate + 2 H(+) = 2 Fe(III)-[cytochrome] + nitrite + H2O. Functionally, catalytic subunit of the periplasmic nitrate reductase complex NapAB. Receives electrons from NapB and catalyzes the reduction of nitrate to nitrite. This Escherichia coli O127:H6 (strain E2348/69 / EPEC) protein is Periplasmic nitrate reductase.